The chain runs to 209 residues: Transcription factor 23 (209 aa).

2 disordered regions span residues 1-20 (MSQE…GHNK) and 54-85 (LSRA…ARER). The segment covering 72–85 (GRSEASPENAARER) has biased composition (basic and acidic residues). One can recognise a bHLH domain in the interval 75–127 (EASPENAARERTRVKTLRQAFLALQAALPAVPPDTKLSKLDVLVLATSYIAHL).

Forms inactive heterodimeric complex with TCF3. In terms of tissue distribution, highly expressed in the uterus (predominantly in myometrium), ovary, and testis. Expression in the uterus is higher in the diestrus phase than in the estrus phase and reaches a maximum at 7.5 dpc. Expression declines towards the time of delivery and returns to the non-pregnant level 4 days after delivery. Low expression seen in lung, heart, intestine, and spleen.

It localises to the nucleus. Inhibits E-box-mediated binding and transactivation of bHLH factors. Inhibitory effect is similar to that of ID proteins. Inhibits the formation of TCF3 and MYOD1 homodimers and heterodimers. Lacks DNA binding activity. May be involved in the regulation or modulation of smooth muscle contraction of the uterus during pregnancy and particularly around the time of delivery. Seems to play a role in the inhibition of myogenesis. The chain is Transcription factor 23 (Tcf23) from Mus musculus (Mouse).